The primary structure comprises 297 residues: N-acetylmuramic acid 6-phosphate etherase (297 aa).

Residues 55-218 (AAAALKSGGR…STGAMVKFGK (164 aa)) form the SIS domain. The Proton donor role is filled by E83. E114 is an active-site residue.

The protein belongs to the GCKR-like family. MurNAc-6-P etherase subfamily. As to quaternary structure, homodimer.

The enzyme catalyses N-acetyl-D-muramate 6-phosphate + H2O = N-acetyl-D-glucosamine 6-phosphate + (R)-lactate. It functions in the pathway amino-sugar metabolism; 1,6-anhydro-N-acetylmuramate degradation. It participates in amino-sugar metabolism; N-acetylmuramate degradation. The protein operates within cell wall biogenesis; peptidoglycan recycling. Specifically catalyzes the cleavage of the D-lactyl ether substituent of MurNAc 6-phosphate, producing GlcNAc 6-phosphate and D-lactate. Together with AnmK, is also required for the utilization of anhydro-N-acetylmuramic acid (anhMurNAc) either imported from the medium or derived from its own cell wall murein, and thus plays a role in cell wall recycling. The sequence is that of N-acetylmuramic acid 6-phosphate etherase from Salmonella schwarzengrund (strain CVM19633).